A 145-amino-acid chain; its full sequence is Hemoglobin subunit beta (145 aa).

The Globin domain maps to 1–145 (MLTAEEKAAV…VANALAHRYH (145 aa)). T11 bears the Phosphothreonine mark. Phosphoserine is present on S43. Position 58 is an N6-acetyllysine (K58). Residue H62 coordinates heme b. At K81 the chain carries N6-acetyllysine. H91 is a binding site for heme b. C92 is subject to S-nitrosocysteine.

This sequence belongs to the globin family. Heterotetramer of two alpha chains and two beta chains. As to expression, red blood cells.

Functionally, involved in oxygen transport from the lung to the various peripheral tissues. In terms of biological role, functions as an endogenous inhibitor of enkephalin-degrading enzymes such as DPP3, and may thereby play a role as a regulator of pain and inflammation. The sequence is that of Hemoglobin subunit beta (HBB) from Bos taurus (Bovine).